A 612-amino-acid chain; its full sequence is UvrABC system protein C (612 aa).

The 79-residue stretch at 20–98 (THSGVYRMLD…IKQHRPKYNI (79 aa)) folds into the GIY-YIG domain. The region spanning 208–243 (SSVLEEISAKMYQASEDMEYEKAQVYRDQLVVLRKL) is the UVR domain.

The protein belongs to the UvrC family. In terms of assembly, interacts with UvrB in an incision complex.

Its subcellular location is the cytoplasm. Functionally, the UvrABC repair system catalyzes the recognition and processing of DNA lesions. UvrC both incises the 5' and 3' sides of the lesion. The N-terminal half is responsible for the 3' incision and the C-terminal half is responsible for the 5' incision. The chain is UvrABC system protein C from Francisella tularensis subsp. tularensis (strain FSC 198).